A 596-amino-acid polypeptide reads, in one-letter code: Fumarate reductase (cytochrome) (596 aa).

The N-terminal stretch at 1 to 25 is a signal peptide; sequence MKKMNLAVCIATLMGTAGLMGTAVA. The heme c site is built by H33, C39, C42, H43, C61, C64, H65, H83, H86, C93, C96, H97, A99, H100, C107, C110, and H111. Residues 143–596 form a flavoprotein-like region; sequence ALASAPHDTV…EEAAKYSKKN (454 aa). FAD-binding residues include A162, E181, N189, A194, G195, G196, G303, and D369. Fumarate is bound at residue G195. G195 contacts succinate. Y386 is a heme c binding site. Residues H390, T402, and E403 each coordinate succinate. 2 residues coordinate fumarate: T402 and E403. The active-site Proton donor is R427. H529 is a fumarate binding site. H529 provides a ligand contact to succinate. Positions 530 and 559 each coordinate FAD. Positions 569 and 572 each coordinate fumarate. Residues R569 and G572 each contribute to the succinate site. FAD-binding residues include A574 and I575.

This sequence in the C-terminal section; belongs to the FAD-dependent oxidoreductase 2 family. FRD/SDH subfamily. As to quaternary structure, monomer. FAD serves as cofactor. Heme c is required as a cofactor.

The protein localises to the periplasm. The enzyme catalyses 2 Fe(III)-[cytochrome c] + succinate = fumarate + 2 Fe(II)-[cytochrome c] + 2 H(+). With respect to regulation, mesaconic acid is a competitive inhibitor of fumarate reduction. Functionally, flavocytochrome that catalyzes the reduction of fumarate to succinate. Is essential for fumarate respiration during anaerobic growth, acting as the terminal reductase. Receives electrons from the membrane-bound tetraheme c-type cytochrome CymA. Is essentially unidirectional, catalyzing only fumarate reduction. Cannot reduce nitrite, dimethylsulphoxide, trimethylamine-N-oxide (TMAO) or sulfite. In vitro, can use the artificial electron donor methyl viologen. The protein is Fumarate reductase (cytochrome) of Shewanella frigidimarina (strain NCIMB 400).